Reading from the N-terminus, the 308-residue chain is N-acetylgalactosamine kinase AgaK (308 aa).

Residues 4–11 and 132–139 each bind ATP; these read GLDIGGTK and GTGGGLCI. His156, Cys174, Cys176, and Cys181 together coordinate Zn(2+).

Belongs to the ROK (NagC/XylR) family.

The protein localises to the cytoplasm. It carries out the reaction N-acetyl-D-galactosamine + ATP = N-acetyl-D-galactosamine 6-phosphate + ADP + H(+). The enzyme catalyses N-acetyl-D-glucosamine + ATP = N-acetyl-D-glucosamine 6-phosphate + ADP + H(+). Its function is as follows. Involved in the pathway of N-acetyl-D-galactosamine degradation. Catalyzes the phosphorylation of N-acetyl-D-galactosamine (GalNAc) to yield D-galactosamine 6-phosphate (GalN-6-P). It can also phosphorylate N-acetylglucosamine (GlcNAc). This is N-acetylgalactosamine kinase AgaK from Shewanella sp. (strain ANA-3).